The sequence spans 104 residues: L-rhamnose mutarotase (104 aa).

Tyr18 serves as a coordination point for substrate. The Proton donor role is filled by His22. Substrate contacts are provided by residues Tyr41 and 76-77 (WW).

It belongs to the rhamnose mutarotase family. As to quaternary structure, homodimer.

The protein resides in the cytoplasm. The catalysed reaction is alpha-L-rhamnose = beta-L-rhamnose. It participates in carbohydrate metabolism; L-rhamnose metabolism. Involved in the anomeric conversion of L-rhamnose. This is L-rhamnose mutarotase from Listeria monocytogenes serovar 1/2a (strain ATCC BAA-679 / EGD-e).